The sequence spans 276 residues: Foldase protein PrsA (276 aa).

The first 18 residues, 1-18 (MRKWMIVAAVAAVFGLSA), serve as a signal peptide directing secretion. A lipid anchor (N-palmitoyl cysteine) is attached at Cys-19. Cys-19 carries the S-diacylglycerol cysteine lipid modification. Residues 133–223 (KPKIRASHIL…YGYHIIKVTD (91 aa)) form the PpiC domain.

It belongs to the PrsA family.

Its subcellular location is the cell membrane. It carries out the reaction [protein]-peptidylproline (omega=180) = [protein]-peptidylproline (omega=0). Its function is as follows. Plays a major role in protein secretion by helping the post-translocational extracellular folding of several secreted proteins. The sequence is that of Foldase protein PrsA from Geobacillus sp. (strain WCH70).